A 564-amino-acid polypeptide reads, in one-letter code: Urease subunit alpha (564 aa).

Positions 126-564 (GGIDTHIHFI…LPMAQRYFLF (439 aa)) constitute a Urease domain. His-131, His-133, and Lys-214 together coordinate Ni(2+). An N6-carboxylysine modification is found at Lys-214. His-216 is a substrate binding site. Positions 243 and 269 each coordinate Ni(2+). His-317 (proton donor) is an active-site residue. Asp-357 is a binding site for Ni(2+).

It belongs to the metallo-dependent hydrolases superfamily. Urease alpha subunit family. Heterotrimer of UreA (gamma), UreB (beta) and UreC (alpha) subunits. Three heterotrimers associate to form the active enzyme. Ni cation is required as a cofactor. Carboxylation allows a single lysine to coordinate two nickel ions.

Its subcellular location is the cytoplasm. The catalysed reaction is urea + 2 H2O + H(+) = hydrogencarbonate + 2 NH4(+). It functions in the pathway nitrogen metabolism; urea degradation; CO(2) and NH(3) from urea (urease route): step 1/1. In Burkholderia pseudomallei (strain 1710b), this protein is Urease subunit alpha.